A 169-amino-acid chain; its full sequence is Ribosome maturation factor RimM (169 aa).

A PRC barrel domain is found at 97–169; sequence PGEYYWYQLI…VITVDWDMNF (73 aa).

It belongs to the RimM family. Binds ribosomal protein uS19.

Its subcellular location is the cytoplasm. In terms of biological role, an accessory protein needed during the final step in the assembly of 30S ribosomal subunit, possibly for assembly of the head region. Essential for efficient processing of 16S rRNA. May be needed both before and after RbfA during the maturation of 16S rRNA. It has affinity for free ribosomal 30S subunits but not for 70S ribosomes. This chain is Ribosome maturation factor RimM, found in Legionella pneumophila (strain Paris).